The sequence spans 439 residues: Testican-1 (439 aa).

An N-terminal signal peptide occupies residues 1 to 21; sequence MPAIAVLAAAAAAWCFLQVES. Cystine bridges form between Cys86–Cys97, Cys91–Cys107, Cys136–Cys166, Cys139–Cys159, and Cys148–Cys180. Positions 130–182 constitute a Kazal-like domain; that stretch reads PSNLVKCKPCPVAQSAMVCGSDGHSYTSKCKLEFHACSTGKSLATLCDGPCPC. The O-linked (GalNAc...) threonine glycan is linked to Thr228. In terms of domain architecture, Thyroglobulin type-1 spans 310 to 376; that stretch reads GLPCQNEMNR…GSRKQGAVSC (67 aa). 3 disulfides stabilise this stretch: Cys313–Cys337, Cys348–Cys355, and Cys357–Cys376. Ser383 and Ser388 each carry an O-linked (Xyl...) (glycosaminoglycan) serine glycan. A disordered region spans residues 415-439; the sequence is VHTRAVTEDDEDEDDDKEDEVGYIW. The span at 422 to 439 shows a compositional bias: acidic residues; that stretch reads EDDEDEDDDKEDEVGYIW.

O-glycosylated. Glycosaminoglycan that contains chondroitin sulfate and heparan sulfate.

Its subcellular location is the secreted. It is found in the extracellular space. It localises to the extracellular matrix. In terms of biological role, may play a role in cell-cell and cell-matrix interactions. May contribute to various neuronal mechanisms in the central nervous system. The sequence is that of Testican-1 (SPOCK1) from Homo sapiens (Human).